A 233-amino-acid polypeptide reads, in one-letter code: Cilia- and flagella-associated protein 299 (233 aa).

The protein localises to the cytoplasm. Its subcellular location is the nucleus. Functionally, may be involved in spermatogenesis. The sequence is that of Cilia- and flagella-associated protein 299 from Homo sapiens (Human).